The primary structure comprises 735 residues: Trafficking protein particle complex subunit 12 (735 aa).

Disordered regions lie at residues 1-204 (MEDA…QPSP) and 237-276 (NPGAGSPAPASPPPLAVPGTEGRPEPVAMRGPQAAAPPAS). Over residues 13–22 (PEAPHPPQLA) the composition is skewed to pro residues. The segment covering 34-50 (ETIDLGGDEFGSEENET) has biased composition (acidic residues). Residues S109 and S184 each carry the phosphoserine modification. 4 TPR repeats span residues 545 to 578 (GRVMYSMANCLLLMKDYVLAVEAYHSVIKYYPEQ), 580 to 613 (PQLLSGIGRISLQIGDIKTAEKYFQDVEKVTQKL), 620 to 653 (IMVLMNSAFLHLGQNNFAEAHRFFTEILRMDPRN), and 654 to 687 (AVANNNAAVCLLYLGKLKDSLRQLEAMVQQDPRH).

In terms of assembly, component of the multisubunit TRAPP (transport protein particle) complex, which includes at least TRAPPC2, TRAPPC2L, TRAPPC3, TRAPPC3L, TRAPPC4, TRAPPC5, TRAPPC8, TRAPPC9, TRAPPC10, TRAPPC11 and TRAPPC12. Interacts with CENPE. In terms of processing, phosphorylated as the cells enter mitosis but is dephosphorylated at or before the onset of anaphase. The phosphorylated form recruits CENPE to kinetochores more efficiently than the non-phosphorylated form.

It is found in the endoplasmic reticulum-Golgi intermediate compartment. It localises to the nucleus. In terms of biological role, component of the TRAPP complex, which is involved in endoplasmic reticulum to Golgi apparatus trafficking at a very early stage. Also plays a role in chromosome congression, kinetochore assembly and stability and controls the recruitment of CENPE to the kinetochores. This Homo sapiens (Human) protein is Trafficking protein particle complex subunit 12.